We begin with the raw amino-acid sequence, 744 residues long: Catalase-peroxidase (744 aa).

A disordered region spans residues 1 to 21 (MANESKCPFHQTAGGGTSNRD). Residues 91 to 241 (WHSAGTYRIG…LAAVQMGLIY (151 aa)) constitute a cross-link (tryptophyl-tyrosyl-methioninium (Trp-Tyr) (with M-267)). His-92 serves as the catalytic Proton acceptor. Residues 241-267 (YVNPEGPEGNPDPVASGKDIRDTFGRM) constitute a cross-link (tryptophyl-tyrosyl-methioninium (Tyr-Met) (with W-91)). His-282 lines the heme b pocket. The interval 361–387 (GAHQWRPKDGKGANTVPDAHDTTKRHA) is disordered.

This sequence belongs to the peroxidase family. Peroxidase/catalase subfamily. As to quaternary structure, homodimer or homotetramer. It depends on heme b as a cofactor. In terms of processing, formation of the three residue Trp-Tyr-Met cross-link is important for the catalase, but not the peroxidase activity of the enzyme.

It carries out the reaction H2O2 + AH2 = A + 2 H2O. The enzyme catalyses 2 H2O2 = O2 + 2 H2O. Its function is as follows. Bifunctional enzyme with both catalase and broad-spectrum peroxidase activity. This is Catalase-peroxidase from Pseudomonas entomophila (strain L48).